The primary structure comprises 151 residues: Large ribosomal subunit protein bL9 (151 aa).

This sequence belongs to the bacterial ribosomal protein bL9 family.

Binds to the 23S rRNA. The polypeptide is Large ribosomal subunit protein bL9 (Lactobacillus helveticus (strain DPC 4571)).